The chain runs to 596 residues: Genetic interactor of prohibitins 3, mitochondrial (596 aa).

The N-terminal 21 residues, 1–21 (MLNLCHALRGVRQFSCSVIVK), are a transit peptide targeting the mitochondrion. Positions 113–305 (ESTLNDILNY…LFDLPGYSTS (193 aa)) constitute a CP-type G domain.

Belongs to the TRAFAC class YlqF/YawG GTPase family. GEP3 subfamily.

The protein localises to the mitochondrion. Its function is as follows. Interacts genetically with prohibitins and thus may be involved in the mitochondrial lipid metabolism. This chain is Genetic interactor of prohibitins 3, mitochondrial (GEP3), found in Saccharomyces cerevisiae (strain AWRI796) (Baker's yeast).